A 223-amino-acid polypeptide reads, in one-letter code: Ribonuclease 3 (223 aa).

An RNase III domain is found at 3 to 125 (LERLQKKLGY…IIAAVYLDAG (123 aa)). Glu38 is a binding site for Mg(2+). Asp42 is an active-site residue. Residues Asp111 and Glu114 each coordinate Mg(2+). Glu114 is an active-site residue. Positions 152 to 222 (DPKTRLQEYL…ALQVIKVLGI (71 aa)) constitute a DRBM domain.

This sequence belongs to the ribonuclease III family. In terms of assembly, homodimer. Mg(2+) serves as cofactor.

Its subcellular location is the cytoplasm. The enzyme catalyses Endonucleolytic cleavage to 5'-phosphomonoester.. In terms of biological role, digests double-stranded RNA. Involved in the processing of primary rRNA transcript to yield the immediate precursors to the large and small rRNAs (23S and 16S). Processes some mRNAs, and tRNAs when they are encoded in the rRNA operon. Processes pre-crRNA and tracrRNA of type II CRISPR loci if present in the organism. The polypeptide is Ribonuclease 3 (Glaesserella parasuis serovar 5 (strain SH0165) (Haemophilus parasuis)).